We begin with the raw amino-acid sequence, 171 residues long: Adenine phosphoribosyltransferase (171 aa).

The protein belongs to the purine/pyrimidine phosphoribosyltransferase family. In terms of assembly, homodimer.

Its subcellular location is the cytoplasm. The catalysed reaction is AMP + diphosphate = 5-phospho-alpha-D-ribose 1-diphosphate + adenine. It functions in the pathway purine metabolism; AMP biosynthesis via salvage pathway; AMP from adenine: step 1/1. Its function is as follows. Catalyzes a salvage reaction resulting in the formation of AMP, that is energically less costly than de novo synthesis. The protein is Adenine phosphoribosyltransferase of Nitrosococcus oceani (strain ATCC 19707 / BCRC 17464 / JCM 30415 / NCIMB 11848 / C-107).